The following is a 580-amino-acid chain: Cytochrome c oxidase subunit 1 (580 aa).

The interval 1–25 (MTAVAPRVDGHVAPQRPEPTGHARK) is disordered. The helical transmembrane segment at 43–63 (IMYIIMSFSFFFLGGLMALLI) threads the bilayer. His87 contacts Fe(II)-heme a. 6 helical membrane passes run 90–110 (VMLL…VLPL), 122–142 (LNAF…AGFL), 171–191 (MWII…INML), 214–234 (IFVT…AALG), 259–279 (LFWF…FGII), and 292–312 (FGYI…MAVW). 2 residues coordinate Cu cation: His265 and Tyr269. The segment at residues 265-269 (HPEVY) is a cross-link (1'-histidyl-3'-tyrosine (His-Tyr)). The Cu cation site is built by His314 and His315. Helical transmembrane passes span 316 to 336 (MFVT…LISV) and 360 to 380 (MIWA…GIML). His398 is a binding site for heme a3. Transmembrane regions (helical) follow at residues 399–419 (FHYT…YFWF), 434–454 (IHFW…HWLG), and 477–497 (ISTI…WNVF). His400 is a Fe(II)-heme a binding site.

This sequence belongs to the heme-copper respiratory oxidase family. As to quaternary structure, associates with subunits II, III and IV to form cytochrome c oxidase. Cu(2+) serves as cofactor. It depends on heme as a cofactor.

The protein resides in the cell membrane. It catalyses the reaction 4 Fe(II)-[cytochrome c] + O2 + 8 H(+)(in) = 4 Fe(III)-[cytochrome c] + 2 H2O + 4 H(+)(out). It participates in energy metabolism; oxidative phosphorylation. Its function is as follows. Cytochrome c oxidase is the component of the respiratory chain that catalyzes the reduction of oxygen to water. Subunits 1-3 form the functional core of the enzyme complex. CO I is the catalytic subunit of the enzyme. Electrons originating in cytochrome c are transferred via the copper A center of subunit 2 and heme A of subunit 1 to the bimetallic center formed by heme A3 and copper B. This is Cytochrome c oxidase subunit 1 (ctaD) from Corynebacterium efficiens (strain DSM 44549 / YS-314 / AJ 12310 / JCM 11189 / NBRC 100395).